We begin with the raw amino-acid sequence, 553 residues long: Efflux pump mlcE (553 aa).

Residues 1–19 (MSEPLPPKEGEPRPQKEES) are compositionally biased toward basic and acidic residues. The disordered stretch occupies residues 1 to 29 (MSEPLPPKEGEPRPQKEESQNDTLEATES). An N-linked (GlcNAc...) asparagine glycan is attached at Asn-21. 13 consecutive transmembrane segments (helical) span residues 41-61 (LVVA…SIIV), 77-96 (VGWY…PLAG), 101-121 (LLGL…GSVL), 136-156 (AVAG…LSTA), 164-184 (VLIG…PLLG), 196-216 (CFYI…VITI), 245-265 (LVGF…LEWG), 273-293 (SSVI…FVLW), 319-339 (LFMG…PIYF), 352-372 (VYML…GFAI), 376-396 (GYYL…AGLV), 440-460 (ALGI…FLDF), and 516-536 (TFYL…GMGW). An N-linked (GlcNAc...) asparagine glycan is attached at Asn-543.

It belongs to the major facilitator superfamily. TCR/Tet family.

It is found in the membrane. Functionally, efflux pump; part of the gene cluster that mediates the biosynthesis of compactin, also known as mevastatin or ML-236B, and which acts as a potent competitive inhibitor of HMG-CoA reductase. The protein is Efflux pump mlcE of Penicillium citrinum.